The following is a 408-amino-acid chain: MINALKGMKDLLDKDAYYYEKVIKICEEVAKNYGFTFINTPHLELCTLFKRSVGESSDIVGKEMYEFIDKGENHVCMRPEGTAGVVRAYIEKKLDKNTSVKRWFYYGSMFRYERPQKGRLREFHQFGVESLGIPNVYEDASIILMLVEIFSRLGIDFKLQLNSLGCSQCLPKYRDRLVEFLDSKEGFCEDCLRRKNLNPIRVLDCKNEHCQNLLENAPLLINNLCTSCQKDFETLQQILKDNGVKFELDSKLVRGLDYYSKTAFEFISDEIGAKAAIAGGGRYDRLIEYLGGKSGYGIGFAMGIERIITILEQKEEKIQREGIYLCAMDEIYIQKLLHIATNLRKEYKVLLSYEARKLAKHLENADKNNTEIFLCMGENEAQNESLFYKNLAKKEEKMIKISDLKKVL.

This sequence belongs to the class-II aminoacyl-tRNA synthetase family. Homodimer.

The protein resides in the cytoplasm. The enzyme catalyses tRNA(His) + L-histidine + ATP = L-histidyl-tRNA(His) + AMP + diphosphate + H(+). In Campylobacter jejuni subsp. jejuni serotype O:2 (strain ATCC 700819 / NCTC 11168), this protein is Histidine--tRNA ligase.